Consider the following 468-residue polypeptide: ATP synthase subunit beta (468 aa).

150 to 157 (GGAGVGKT) is a binding site for ATP.

It belongs to the ATPase alpha/beta chains family. In terms of assembly, F-type ATPases have 2 components, CF(1) - the catalytic core - and CF(0) - the membrane proton channel. CF(1) has five subunits: alpha(3), beta(3), gamma(1), delta(1), epsilon(1). CF(0) has three main subunits: a(1), b(2) and c(9-12). The alpha and beta chains form an alternating ring which encloses part of the gamma chain. CF(1) is attached to CF(0) by a central stalk formed by the gamma and epsilon chains, while a peripheral stalk is formed by the delta and b chains.

The protein resides in the cell inner membrane. The catalysed reaction is ATP + H2O + 4 H(+)(in) = ADP + phosphate + 5 H(+)(out). Produces ATP from ADP in the presence of a proton gradient across the membrane. The catalytic sites are hosted primarily by the beta subunits. This chain is ATP synthase subunit beta, found in Acidovorax ebreus (strain TPSY) (Diaphorobacter sp. (strain TPSY)).